The sequence spans 284 residues: D-tagatose-1,6-bisphosphate aldolase subunit GatY (284 aa).

Catalysis depends on D82, which acts as the Proton donor. Positions 83 and 180 each coordinate Zn(2+). Position 181 (G181) interacts with dihydroxyacetone phosphate. H208 contacts Zn(2+). Residues 209-211 (GAS) and 230-233 (NVAT) contribute to the dihydroxyacetone phosphate site.

It belongs to the class II fructose-bisphosphate aldolase family. TagBP aldolase GatY subfamily. As to quaternary structure, forms a complex with GatZ. Zn(2+) is required as a cofactor.

The catalysed reaction is D-tagatofuranose 1,6-bisphosphate = D-glyceraldehyde 3-phosphate + dihydroxyacetone phosphate. It functions in the pathway carbohydrate metabolism; D-tagatose 6-phosphate degradation; D-glyceraldehyde 3-phosphate and glycerone phosphate from D-tagatose 6-phosphate: step 2/2. In terms of biological role, catalytic subunit of the tagatose-1,6-bisphosphate aldolase GatYZ, which catalyzes the reversible aldol condensation of dihydroxyacetone phosphate (DHAP or glycerone-phosphate) with glyceraldehyde 3-phosphate (G3P) to produce tagatose 1,6-bisphosphate (TBP). Requires GatZ subunit for full activity and stability. Is involved in the catabolism of galactitol. The protein is D-tagatose-1,6-bisphosphate aldolase subunit GatY of Salmonella enteritidis PT4 (strain P125109).